The following is a 704-amino-acid chain: Protein polyglycylase TTLL10 (704 aa).

Disordered regions lie at residues 1-32 (MALH…LPSP), 46-125 (GHRA…SVKE), and 137-170 (DADD…PGQG). Residues 93 to 105 (VSSKRSKRSRIHP) are compositionally biased toward basic residues. Residues 114-125 (THEKQMGSSVKE) show a composition bias toward basic and acidic residues. A TTL domain is found at 169–540 (QGPFFYIGGT…TCQKSLHSQK (372 aa)). ATP-binding positions include lysine 301, 307–308 (QG), 350–353 (QRYV), 363–365 (KFD), and 406–407 (TN). Glutamine 307 is a binding site for a protein. Aspartate 486, glutamate 499, and asparagine 501 together coordinate Mg(2+). Positions 565-704 (LASSRPLNRL…EQRSTSHRGS (140 aa)) are disordered. 2 stretches are compositionally biased toward pro residues: residues 576 to 588 (NPNP…ANPH) and 596 to 612 (HPHP…PPRP). Composition is skewed to low complexity over residues 616 to 629 (AASS…AAIS) and 654 to 667 (SDSS…SEPS).

The cofactor is Mg(2+). As to expression, highly expressed in testis. Expressed in brain, heart, kidney, liver, lung, muscle and trachea.

The protein localises to the cytoplasm. It is found in the cytoskeleton. It localises to the cell projection. The protein resides in the cilium. Its subcellular location is the cilium axoneme. It catalyses the reaction (glycyl)(n)-glycyl-L-glutamyl-[protein] + glycine + ATP = (glycyl)(n+1)-glycyl-L-glutamyl-[protein] + ADP + phosphate + H(+). Polyglycylase which modifies both tubulin and non-tubulin proteins, generating polyglycine side chains of variable lengths on the gamma-carboxyl groups of specific glutamate residues of target proteins. Involved in the elongation step rather than the initiation step of the polyglycylation reaction. Polyglycylates alpha-tubulin and beta-tubulin. Polyglycylates non-tubulin proteins such as nucleosome assembly protein NAP1. This Mus musculus (Mouse) protein is Protein polyglycylase TTLL10.